The primary structure comprises 274 residues: Cytochrome b-c1 complex subunit Rieske, mitochondrial (274 aa).

Residues 79–103 (SHTDVKVPDFYDYRRLEVLDSTKSS) lie on the Mitochondrial matrix side of the membrane. A helical membrane pass occupies residues 104–140 (RESSEARKGFSYLVTAVTTVGVAYAAKNVVTQFISSM). Topologically, residues 141-274 (SASADVLAMA…FTGDDVVVVG (134 aa)) are mitochondrial intermembrane. The 86-residue stretch at 187–272 (EAAVELSQLR…YEFTGDDVVV (86 aa)) folds into the Rieske domain. Cys217, His219, Cys236, His239, and Ser241 together coordinate [2Fe-2S] cluster. A disulfide bridge connects residues Cys222 and Cys238.

This sequence belongs to the Rieske iron-sulfur protein family. As to quaternary structure, component of the ubiquinol-cytochrome c oxidoreductase (cytochrome b-c1 complex, complex III, CIII), a multisubunit enzyme composed of 11 subunits. The complex is composed of 3 respiratory subunits cytochrome b, cytochrome c1 and Rieske protein UQCRFS1, 2 core protein subunits UQCRC1/QCR1 and UQCRC2/QCR2, and 6 low-molecular weight protein subunits UQCRH/QCR6, UQCRB/QCR7, UQCRQ/QCR8, UQCR10/QCR9, UQCR11/QCR10 and subunit 9, the cleavage product of Rieske protein UQCRFS1. The complex exists as an obligatory dimer and forms supercomplexes (SCs) in the inner mitochondrial membrane with NADH-ubiquinone oxidoreductase (complex I, CI) and cytochrome c oxidase (complex IV, CIV), resulting in different assemblies (supercomplex SCI(1)III(2)IV(1) and megacomplex MCI(2)III(2)IV(2)). Incorporation of the Rieske protein UQCRFS1 is the penultimate step in complex III assembly. Interacts with TTC19, which is involved in the clearance of UQCRFS1 fragments. In terms of assembly, component of the ubiquinol-cytochrome c oxidoreductase (cytochrome b-c1 complex, complex III, CIII). Subunit 9 corresponds to the mitochondrial targeting sequence (MTS) of Rieske protein UQCRFS1. It is retained after processing and incorporated inside complex III, where it remains bound to the complex and localizes between the 2 core subunits UQCRC1/QCR1 and UQCRC2/QCR2. The cofactor is [2Fe-2S] cluster. Proteolytic processing is necessary for the correct insertion of UQCRFS1 in the complex III dimer. Several fragments are generated during UQCRFS1 insertion, most probably due to the endogenous matrix-processing peptidase (MPP) activity of the 2 core protein subunits UQCRC1/QCR1 and UQCRC2/QCR2, which are homologous to the 2 mitochondrial-processing peptidase (MPP) subunits beta-MPP and alpha-MPP respectively. The action of the protease is also necessary for the clearance of the UQCRFS1 fragments.

The protein resides in the mitochondrion inner membrane. The enzyme catalyses a quinol + 2 Fe(III)-[cytochrome c](out) = a quinone + 2 Fe(II)-[cytochrome c](out) + 2 H(+)(out). Component of the ubiquinol-cytochrome c oxidoreductase, a multisubunit transmembrane complex that is part of the mitochondrial electron transport chain which drives oxidative phosphorylation. The respiratory chain contains 3 multisubunit complexes succinate dehydrogenase (complex II, CII), ubiquinol-cytochrome c oxidoreductase (cytochrome b-c1 complex, complex III, CIII) and cytochrome c oxidase (complex IV, CIV), that cooperate to transfer electrons derived from NADH and succinate to molecular oxygen, creating an electrochemical gradient over the inner membrane that drives transmembrane transport and the ATP synthase. The cytochrome b-c1 complex catalyzes electron transfer from ubiquinol to cytochrome c, linking this redox reaction to translocation of protons across the mitochondrial inner membrane, with protons being carried across the membrane as hydrogens on the quinol. In the process called Q cycle, 2 protons are consumed from the matrix, 4 protons are released into the intermembrane space and 2 electrons are passed to cytochrome c. The Rieske protein is a catalytic core subunit containing a [2Fe-2S] iron-sulfur cluster. It cycles between 2 conformational states during catalysis to transfer electrons from the quinol bound in the Q(0) site in cytochrome b to cytochrome c1. Incorporation of UQCRFS1 is the penultimate step in complex III assembly. Functionally, component of the ubiquinol-cytochrome c oxidoreductase (cytochrome b-c1 complex, complex III, CIII). UQCRFS1 undergoes proteolytic processing once it is incorporated in the complex III dimer. One of the fragments, called subunit 9, corresponds to its mitochondrial targeting sequence (MTS). The proteolytic processing is necessary for the correct insertion of UQCRFS1 in the complex III dimer, but the persistence of UQCRFS1-derived fragments may prevent newly imported UQCRFS1 to be processed and assembled into complex III and is detrimental for the complex III structure and function. This is Cytochrome b-c1 complex subunit Rieske, mitochondrial (UQCRFS1) from Chlorocebus aethiops (Green monkey).